The chain runs to 777 residues: Aminopeptidase P (777 aa).

The N-terminal stretch at 1 to 17 (MQLNFLLFVFIFLMVFH) is a signal peptide. Histidine 551 contacts substrate. 2 residues coordinate Mn(2+): aspartate 570 and aspartate 581. Histidine 640 serves as a coordination point for substrate. Position 644 (histidine 644) interacts with Mn(2+). Position 653 (histidine 653) interacts with substrate. Residues glutamate 676 and glutamate 690 each coordinate Mn(2+).

This sequence belongs to the peptidase M24B family. Homodimer. Requires Mn(2+) as cofactor. Post-translationally, the N-terminus may be proteolytically cleaved to generate a 73-kDa mature form.

It localises to the vacuole lumen. The protein localises to the cytoplasm. It carries out the reaction Release of any N-terminal amino acid, including proline, that is linked to proline, even from a dipeptide or tripeptide.. Partially activated by Co(2+) and Mg(2+) has no effect. Inhibited by 1 mM Zn(2+), Ni(2+), or Cu(2+). Inhibited by apstatin, a non-hydrolysable peptide analog. Functionally, catalyzes the removal of a penultimate prolyl residue from the N-termini of peptides. In the food vacuole, involved in the final step of host hemoglobin catabolism, by cleaving hemoglobin-derived oligopeptides. In the cytoplasm, may be involved in the last steps of the turnover of ubiquitinated proteins. The sequence is that of Aminopeptidase P from Plasmodium falciparum (isolate 3D7).